Reading from the N-terminus, the 103-residue chain is Small ribosomal subunit protein uS10 (103 aa).

It belongs to the universal ribosomal protein uS10 family. As to quaternary structure, part of the 30S ribosomal subunit.

Involved in the binding of tRNA to the ribosomes. This is Small ribosomal subunit protein uS10 from Haemophilus ducreyi (strain 35000HP / ATCC 700724).